The primary structure comprises 83 residues: U5-theraphotoxin-Hs1b 1 (83 aa).

The N-terminal stretch at 1–21 is a signal peptide; that stretch reads MKTSMFLTLTGLVLLFVVCYA. Residues 22–49 constitute a propeptide that is removed on maturation; it reads SESEEKEFPKELLSSIFAADSDFKEEER. 3 cysteine pairs are disulfide-bonded: Cys51/Cys63, Cys56/Cys68, and Cys62/Cys75.

It belongs to the neurotoxin 10 (Hwtx-1) family. 51 (Hntx-8) subfamily. Hntx-8 sub-subfamily. Expressed by the venom gland.

The protein localises to the secreted. Functionally, weakly inhibits 5HT3A receptors and Kv1.3/KCNA3 voltage-gated potassium channels. Agglutinates erythrocytes. The sequence is that of U5-theraphotoxin-Hs1b 1 from Cyriopagopus schmidti (Chinese bird spider).